Consider the following 266-residue polypeptide: MTDRDRLRPPLDERSLRDQLIGAGSGWRQLDVVAQTGSTNADLLARAASGADIDGVVLIAEHQTAGRGRHGRGWAATARAQIILSVGVRVVDVPVQAWGWLSLAAGLAVLDSVAPLIAVPPAETGLKWPNDVLARGGKLAGILAEVAQPFVVLGVGLNVTQAPEEVDPDATSLLDLGVAAPDRNRIASRLLRELEARIIQWRNANPQLAADYRARSLTIGSRVRVELPGGQDVVGIARDIDDQGRLCLDVGGRTVVVSAGDVVHLR.

The 189-residue stretch at 14-202 (RSLRDQLIGA…ELEARIIQWR (189 aa)) folds into the BPL/LPL catalytic domain. Residues 38–39 (ST), Gln63, Arg67, and Lys138 each bind biotin.

The protein belongs to the biotin--protein ligase family. Monomer in solution. Forms dimers under specific crystallization conditions.

It carries out the reaction biotin + L-lysyl-[protein] + ATP = N(6)-biotinyl-L-lysyl-[protein] + AMP + diphosphate + H(+). The catalysed reaction is biotin + ATP + H(+) = biotinyl-5'-AMP + diphosphate. The enzyme catalyses biotinyl-5'-AMP + L-lysyl-[protein] = N(6)-biotinyl-L-lysyl-[protein] + AMP + 2 H(+). With respect to regulation, binding of biotin and ATP significantly increases the thermal stability of BirA and leads to the formation of a high affinity holoenzyme complex. Catalyzes the transfer of biotin onto a conserved lysine residue of the biotin carboxyl carrier protein (BCCP) domain of acetyl-CoA carboxylase and converts it to active holo-BCCP. Forms an acyl-adenylate intermediate. Cannot use GTP or desthiobiotin. The polypeptide is Biotin--[acetyl-CoA-carboxylase] ligase (Mycobacterium tuberculosis (strain ATCC 25618 / H37Rv)).